Consider the following 575-residue polypeptide: MIKSTNIQAIGSGIMHQINNVYSLTPLSLPMELTPSCNEFYLKTWSEWEKNGTPGEQRNIAFNRLKICLQNQEAELNLSELDLKTLPDLPPQITTLEIRKNLLTHLPDLPPMLKVIHAQFNQLESLPALPETLEELNAGDNKIKELPFLPENLTHLRVHNNRLHILPLLPPELKLLVVSGNRLDSIPPFPDKLEGLALANNFIEQLPELPFSMNRAVLMNNNLTTLPESVLRLAQNAFVNVAGNPLSGHTMRTLQQITTGPDYSGPQIFFSMGNSATISAPEHSLADAVTAWFPENKQSDVSQIWHAFEHEEHANTFSAFLDRLSDTVSARNTSGFREQVAAWLEKLSASAELRQQSFAVAADATESCEDRVALTWNNLRKTLLVHQASEGLFDNDTGALLSLGREMFRLEILEDIARDKVRTLHFVDEIEVYLAFQTMLAEKLQLSTAVKEMRFYGVSGVTANDLRTAEAMVRSREENEFTDWFSLWGPWHAVLKRTEADRWAQAEEQKYEMLENEYSQRVADRLKASGLSGDADAEREAGAQVMRETEQQIYRQLTDEVLALRLSENGSNHIA.

The segment at 1-270 is interaction with target proteins; sequence MIKSTNIQAI…PDYSGPQIFF (270 aa). LRR repeat units follow at residues 69–90, 91–115, 117–130, 131–150, 151–170, 171–195, 197–209, and 210–233; these read LQNQ…PDLP, PQIT…MLKV, HAQF…PALP, ETLE…PFLP, ENLT…PLLP, PELK…KLEG, ALAN…LPEL, and PFSM…VLRL. Residues 271-281 form a linker region; sequence SMGNSATISAP. The segment at 282–575 is E3 ubiquitin-protein ligase catalytic domain; it reads EHSLADAVTA…LSENGSNHIA (294 aa). The 292-residue stretch at 284-575 folds into the NEL domain; sequence SLADAVTAWF…LSENGSNHIA (292 aa). Cys-368 serves as the catalytic Glycyl thioester intermediate.

The protein belongs to the LRR-containing bacterial E3 ligase family. As to quaternary structure, interacts with human RBCK1/HOIL-1 and RNF31/HOIP components of the LUBAC complex. Post-translationally, ubiquitinated in the presence of host E1 ubiquitin-activating enzyme, E2 ubiquitin-conjugating enzyme and ubiquitin.

Its subcellular location is the secreted. The protein resides in the host cytoplasm. The catalysed reaction is S-ubiquitinyl-[E2 ubiquitin-conjugating enzyme]-L-cysteine + [acceptor protein]-L-lysine = [E2 ubiquitin-conjugating enzyme]-L-cysteine + N(6)-ubiquitinyl-[acceptor protein]-L-lysine.. The protein operates within protein modification; protein ubiquitination. Its activity is regulated as follows. Exists in an autoinhibited state in the absence of substrate protein, probably due to interactions of the leucine-rich repeat domain with the catalytic domain. Is activated upon binding to a substrate protein. E3 ubiquitin-protein ligase effector that inhibits host cell innate immunity during bacterial infection by catalyzing 'Lys-48'-linked polyubiquitination and subsequent degradation of host RNF31/HOIP and RBCK1/HOIL-1. Host RNF31/HOIP is the catalytic component of the LUBAC complex, which conjugates linear ('Met-1'-linked) polyubiquitin chains at the surface of bacteria invading the host cytosol to form the ubiquitin coat surrounding bacteria. The bacterial ubiquitin coat acts as an 'eat-me' signal for xenophagy and promotes NF-kappa-B activation. By promoting degradation of host RNF31/HOIP, IpaH1.4 prevents formation of the bacterial ubiquitin coat and activation of host cell innate immunity. This chain is E3 ubiquitin-protein ligase IpaH1.4, found in Shigella flexneri.